Consider the following 469-residue polypeptide: 6-phosphogluconate dehydrogenase, NADP(+)-dependent, decarboxylating (469 aa).

NADP(+) is bound by residues 10-15 (GLAVMG), 33-35 (NRS), 74-76 (VKA), and N102. Residues N102 and 128–130 (SGG) contribute to the substrate site. The active-site Proton acceptor is K182. 185 to 186 (HN) contacts substrate. E189 functions as the Proton donor in the catalytic mechanism. Substrate is bound by residues Y190, K260, R287, R446, and H452.

It belongs to the 6-phosphogluconate dehydrogenase family. Homodimer.

The catalysed reaction is 6-phospho-D-gluconate + NADP(+) = D-ribulose 5-phosphate + CO2 + NADPH. The protein operates within carbohydrate degradation; pentose phosphate pathway; D-ribulose 5-phosphate from D-glucose 6-phosphate (oxidative stage): step 3/3. Catalyzes the oxidative decarboxylation of 6-phosphogluconate to ribulose 5-phosphate and CO(2), with concomitant reduction of NADP to NADPH. Is the predominant 6-P-gluconate dehydrogenase isoenzyme in B.subtilis during growth on glucose and gluconate. This is 6-phosphogluconate dehydrogenase, NADP(+)-dependent, decarboxylating (gndA) from Bacillus subtilis (strain 168).